Here is a 480-residue protein sequence, read N- to C-terminus: Glutamate--tRNA ligase (480 aa).

The short motif at 21–31 (PSPTGYLHVGG) is the 'HIGH' region element. The span at 122-146 (NTQEQNKQKPRYDRHCLGDHKHSPE) shows a compositional bias: basic and acidic residues. The segment at 122–149 (NTQEQNKQKPRYDRHCLGDHKHSPEQPH) is disordered. The 'KMSKS' region signature appears at 248–252 (KLSKR). Residue K251 coordinates ATP.

The protein belongs to the class-I aminoacyl-tRNA synthetase family. Glutamate--tRNA ligase type 1 subfamily. Monomer.

Its subcellular location is the cytoplasm. It catalyses the reaction tRNA(Glu) + L-glutamate + ATP = L-glutamyl-tRNA(Glu) + AMP + diphosphate. Catalyzes the attachment of glutamate to tRNA(Glu) in a two-step reaction: glutamate is first activated by ATP to form Glu-AMP and then transferred to the acceptor end of tRNA(Glu). This chain is Glutamate--tRNA ligase, found in Pasteurella multocida (strain Pm70).